A 559-amino-acid chain; its full sequence is Alpha-(1,6)-fucosyltransferase (559 aa).

The Cytoplasmic segment spans residues 1–4 (MLKC). The helical; Signal-anchor for type II membrane protein transmembrane segment at 5-24 (IAAVGTVVWMTMFLFLYSQL) threads the bilayer. At 25–559 (SNNQSGGDSI…RKFKFEALLD (535 aa)) the chain is on the lumenal side. Asparagine 27 is a glycosylation site (N-linked (GlcNAc...) asparagine). Residues 63 to 74 (QERNDQHKKIME) show a composition bias toward basic and acidic residues. The disordered stretch occupies residues 63 to 90 (QERNDQHKKIMEQSHQLPPNPENPSLPK). Over residues 80-90 (PPNPENPSLPK) the composition is skewed to pro residues. N-linked (GlcNAc...) asparagine glycosylation occurs at asparagine 134. 3 disulfides stabilise this stretch: cysteine 188-cysteine 251, cysteine 196-cysteine 214, and cysteine 202-cysteine 206. The GT23 domain occupies 190–480 (EAKTLVCNLD…ADDGSKFHSL (291 aa)). The segment at 351-352 (RR) is important for donor substrate binding. Cysteine 452 and cysteine 459 are joined by a disulfide. The SH3 domain occupies 489-550 (QQAHEVIVIE…PSYKVVNDWR (62 aa)).

The protein belongs to the glycosyltransferase 23 family. It depends on Mn(2+) as a cofactor. The cofactor is Mg(2+).

It is found in the golgi apparatus. It localises to the golgi stack membrane. It carries out the reaction N(4)-{beta-D-GlcNAc-(1-&gt;2)-alpha-D-Man-(1-&gt;3)-[beta-D-GlcNAc-(1-&gt;2)-alpha-D-Man-(1-&gt;6)]-beta-D-Man-(1-&gt;4)-beta-D-GlcNAc-(1-&gt;4)-beta-D-GlcNAc}-L-asparaginyl-[protein] + GDP-beta-L-fucose = an N(4)-{beta-D-GlcNAc-(1-&gt;2)-alpha-D-Man-(1-&gt;3)-[beta-D-GlcNAc-(1-&gt;2)-alpha-D-Man-(1-&gt;6)]-beta-D-Man-(1-&gt;4)-beta-D-GlcNAc-(1-&gt;4)-[alpha-L-Fuc-(1-&gt;6)]-beta-D-GlcNAc}-L-asparaginyl-[protein] + GDP + H(+). The protein operates within protein modification; protein glycosylation. Inhibited by Fe(3+), Ni(2+) and Cu(2+). Catalyzes the addition of fucose in alpha 1-6 linkage to the first GlcNAc residue, next to the peptide chains in N-glycans. The addition is prevented if the GlcNAc residue is already fucosylated. Involved in susceptibility to the nematotoxic C.cinerea galectin Cgl2, likely by contributing to the synthesis of core alpha-1,6-fucosylated N-glycans to which Cgl2 binds. The sequence is that of Alpha-(1,6)-fucosyltransferase from Caenorhabditis elegans.